Consider the following 721-residue polypeptide: Sodium/hydrogen exchanger 6 (721 aa).

Residues 1–44 are disordered; sequence MTSPKPWARSAGSCQTQRAVRTRKKECREEGESDTEKGPAASSA. Basic and acidic residues predominate over residues 26–37; sequence ECREEGESDTEK. Transmembrane regions (helical) follow at residues 91–111, 123–143, 196–216, 231–251, 272–292, 298–318, 344–364, 388–412, 434–454, 456–476, 499–519, and 535–555; these read SANL…IWLF, GLAM…IHVP, VTFD…FYAG, ILAY…SIMY, CLLF…AIFH, VELY…AIVL, IGIF…TGVV, MSWS…FCGI, FELL…LTLF, FQNH…IFLG, NFQH…ALAI, and LLIV…MLSC.

It belongs to the monovalent cation:proton antiporter 1 (CPA1) transporter (TC 2.A.36) family. As to quaternary structure, homodimer. Interacts with RACK1; regulates the distribution of SLC9A6 between endosomes and the plasma membrane. Ubiquitinated (in vitro). In terms of processing, glycosylated.

The protein localises to the endosome membrane. It is found in the recycling endosome membrane. The protein resides in the early endosome membrane. It localises to the late endosome membrane. Its subcellular location is the cell membrane. The catalysed reaction is Na(+)(in) + H(+)(out) = Na(+)(out) + H(+)(in). The enzyme catalyses K(+)(in) + H(+)(out) = K(+)(out) + H(+)(in). In terms of biological role, endosomal Na(+), K(+)/H(+) antiporter. Mediates the electroneutral exchange of endosomal luminal H(+) for a cytosolic Na(+) or K(+). By facilitating proton efflux, SLC9A6 counteracts the acidity generated by vacuolar (V)-ATPase, thereby limiting luminal acidification. Responsible for alkalizing and maintaining the endosomal pH, and consequently in, e.g., endosome maturation and trafficking of recycling endosomal cargo. Plays a critical role during neurodevelopment by regulating synaptic development and plasticity. Implicated in the maintenance of cell polarity in a manner that is dependent on its ability to modulate intravesicular pH. Regulates intracelular pH in some specialized cells, osteoclasts and stereocilia where this transporter localizes to the plasma membrane. The chain is Sodium/hydrogen exchanger 6 from Rattus norvegicus (Rat).